Consider the following 82-residue polypeptide: Cytochrome b-c1 complex subunit 8 (82 aa).

At 1–43 (MGREFGNLARIRHVISYSLSPFEQRAFPSYFSKGIPNVLRRTR) the chain is on the mitochondrial matrix side. S16 carries the post-translational modification Phosphoserine. N6-acetyllysine; alternate is present on K33. K33 bears the N6-succinyllysine; alternate mark. A helical membrane pass occupies residues 44–62 (ERILRVAPPFVVVYLIYTW). At 63-82 (GNQEFEQSKRKNPAMYENDK) the chain is on the mitochondrial intermembrane side.

The protein belongs to the UQCRQ/QCR8 family. As to quaternary structure, component of the ubiquinol-cytochrome c oxidoreductase (cytochrome b-c1 complex, complex III, CIII), a multisubunit enzyme composed of 11 subunits. The complex is composed of 3 respiratory subunits cytochrome b, cytochrome c1 and Rieske protein UQCRFS1, 2 core protein subunits UQCRC1/QCR1 and UQCRC2/QCR2, and 6 low-molecular weight protein subunits UQCRH/QCR6, UQCRB/QCR7, UQCRQ/QCR8, UQCR10/QCR9, UQCR11/QCR10 and subunit 9, the cleavage product of Rieske protein UQCRFS1. The complex exists as an obligatory dimer and forms supercomplexes (SCs) in the inner mitochondrial membrane with NADH-ubiquinone oxidoreductase (complex I, CI) and cytochrome c oxidase (complex IV, CIV), resulting in different assemblies (supercomplex SCI(1)III(2)IV(1) and megacomplex MCI(2)III(2)IV(2)). Interacts with UQCC6.

The protein localises to the mitochondrion inner membrane. Its function is as follows. Component of the ubiquinol-cytochrome c oxidoreductase, a multisubunit transmembrane complex that is part of the mitochondrial electron transport chain which drives oxidative phosphorylation. The respiratory chain contains 3 multisubunit complexes succinate dehydrogenase (complex II, CII), ubiquinol-cytochrome c oxidoreductase (cytochrome b-c1 complex, complex III, CIII) and cytochrome c oxidase (complex IV, CIV), that cooperate to transfer electrons derived from NADH and succinate to molecular oxygen, creating an electrochemical gradient over the inner membrane that drives transmembrane transport and the ATP synthase. The cytochrome b-c1 complex catalyzes electron transfer from ubiquinol to cytochrome c, linking this redox reaction to translocation of protons across the mitochondrial inner membrane, with protons being carried across the membrane as hydrogens on the quinol. In the process called Q cycle, 2 protons are consumed from the matrix, 4 protons are released into the intermembrane space and 2 electrons are passed to cytochrome c. In Mus musculus (Mouse), this protein is Cytochrome b-c1 complex subunit 8 (Uqcrq).